The sequence spans 259 residues: Methionine aminopeptidase (259 aa).

Histidine 78 contacts substrate. Positions 95, 106, and 169 each coordinate a divalent metal cation. Histidine 176 is a substrate binding site. Residue glutamate 202 participates in a divalent metal cation binding. Tryptophan 220 provides a ligand contact to substrate. Glutamate 234 contacts a divalent metal cation.

The protein belongs to the peptidase M24A family. Methionine aminopeptidase type 1 subfamily. Monomer. Co(2+) serves as cofactor. The cofactor is Zn(2+). Mn(2+) is required as a cofactor. It depends on Fe(2+) as a cofactor.

It carries out the reaction Release of N-terminal amino acids, preferentially methionine, from peptides and arylamides.. In terms of biological role, removes the N-terminal methionine from nascent proteins. The N-terminal methionine is often cleaved when the second residue in the primary sequence is small and uncharged (Met-Ala-, Cys, Gly, Pro, Ser, Thr, or Val). Requires deformylation of the N(alpha)-formylated initiator methionine before it can be hydrolyzed. The sequence is that of Methionine aminopeptidase from Rickettsia prowazekii (strain Madrid E).